Reading from the N-terminus, the 334-residue chain is Tryptophan--tRNA ligase (334 aa).

ATP is bound by residues Gln-11–Ser-13 and Gly-19–Asn-20. A 'HIGH' region motif is present at residues Pro-12–Asn-20. L-tryptophan is bound at residue Asp-135. ATP-binding positions include Gly-147–Asp-149, Val-186, and Lys-195–Ser-199. The 'KMSKS' region signature appears at Lys-195–Ser-199.

The protein belongs to the class-I aminoacyl-tRNA synthetase family. Homodimer.

It localises to the cytoplasm. The catalysed reaction is tRNA(Trp) + L-tryptophan + ATP = L-tryptophyl-tRNA(Trp) + AMP + diphosphate + H(+). In terms of biological role, catalyzes the attachment of tryptophan to tRNA(Trp). The protein is Tryptophan--tRNA ligase of Klebsiella aerogenes (Enterobacter aerogenes).